A 122-amino-acid polypeptide reads, in one-letter code: Large ribosomal subunit protein uL14 (122 aa).

Belongs to the universal ribosomal protein uL14 family. As to quaternary structure, part of the 50S ribosomal subunit. Forms a cluster with proteins L3 and L19. In the 70S ribosome, L14 and L19 interact and together make contacts with the 16S rRNA in bridges B5 and B8.

Binds to 23S rRNA. Forms part of two intersubunit bridges in the 70S ribosome. This chain is Large ribosomal subunit protein uL14, found in Sulfurimonas denitrificans (strain ATCC 33889 / DSM 1251) (Thiomicrospira denitrificans (strain ATCC 33889 / DSM 1251)).